The sequence spans 199 residues: Urease accessory protein UreG (199 aa).

8–15 contacts GTP; the sequence is GPVGSGKT.

It belongs to the SIMIBI class G3E GTPase family. UreG subfamily. Homodimer. UreH, UreF and UreG form a complex that acts as a GTP-hydrolysis-dependent molecular chaperone, activating the urease apoprotein by helping to assemble the nickel containing metallocenter of UreC. The UreE protein probably delivers the nickel.

Its subcellular location is the cytoplasm. Facilitates the functional incorporation of the urease nickel metallocenter. This process requires GTP hydrolysis, probably effectuated by UreG. The sequence is that of Urease accessory protein UreG from Helicobacter pylori (strain G27).